Reading from the N-terminus, the 248-residue chain is Cutinase (248 aa).

The first 17 residues, Met1–Ala17, serve as a signal peptide directing secretion. A propeptide spanning residues Tyr18–Arg28 is cleaved from the precursor. Residues Trp31–Gly70 are lid covering the active site of the uncomplexed enzyme. Disulfide bonds link Cys55/Cys91 and Cys79/Cys153. Residue Ser164 is the Nucleophile of the active site. Residues Cys212 and Cys219 are joined by a disulfide bond. Asp216 is a catalytic residue. His229 serves as the catalytic Proton donor/acceptor.

The protein belongs to the cutinase family.

It is found in the secreted. It catalyses the reaction cutin + H2O = cutin monomers.. Its activity is regulated as follows. Weakly inhibited by n-undecyl phosphonate (C11Y4). Activity unaffected by paraoxon. Catalyzes the hydrolysis of complex carboxylic polyesters found in the cell wall of plants. Degrades cutin, a macromolecule that forms the structure of the plant cuticle. The polypeptide is Cutinase (Hypocrea jecorina (strain QM6a) (Trichoderma reesei)).